Reading from the N-terminus, the 423-residue chain is 5-hydroxytryptamine receptor 1A (423 aa).

At 1 to 38 (MEGLSPRQGNNTTSSEGPFGTLGNATGISDVTFSYQVI) the chain is on the extracellular side. N-linked (GlcNAc...) asparagine glycans are attached at residues Asn-10, Asn-11, and Asn-24. The chain crosses the membrane as a helical span at residues 39 to 59 (TSLLLGTLIFCAVLGNACVVA). Residues 60 to 73 (AIALERSLQNVANY) lie on the Cytoplasmic side of the membrane. Residues 74–98 (LIGSLAVTDLMVSVLVLPMAALYQV) form a helical membrane-spanning segment. Residues 99–107 (LNKWTLGQV) are Extracellular-facing. A helical membrane pass occupies residues 108-132 (TCDLFIALDVLCCTSSILHLCAIAL). An intrachain disulfide couples Cys-109 to Cys-187. Positions 116 and 120 each coordinate serotonin. The DRY motif; important for ligand-induced conformation changes signature appears at 133 to 135 (DRY). At 133–152 (DRYWAITDPIDYVNKRTPRR) the chain is on the cytoplasmic side. The chain crosses the membrane as a helical span at residues 153 to 174 (AAALISLTWLIGFLISIPPMLG). At 175–193 (WRTPEDRSDPDACTISKDH) the chain is on the extracellular side. Residues 194 to 216 (GYTIYSTFGAFYIPLLLMLVLYG) traverse the membrane as a helical segment. Topologically, residues 217–346 (RIFRAARFRI…LARERKTVKT (130 aa)) are cytoplasmic. Residues 235-277 (RKGADARSGVSPAPQPRKSVNGEPGGREWRQGPGSQAGGPLCT) are disordered. Lys-345, Thr-346, and Gly-352 together coordinate 1D-myo-inositol 4-phosphate. A helical transmembrane segment spans residues 347–370 (LGIIMGTFILCWLPFFIVALVLPF). Residues 371 to 378 (CESSCHMP) are Extracellular-facing. A helical transmembrane segment spans residues 379–403 (TLLGAIINWLGYSNSLLNPVIYAYF). Residues 396–400 (NPVIY) carry the NPxxY motif; important for ligand-induced conformation changes and signaling motif. Phe-403, Asn-404, and Lys-405 together coordinate 1D-myo-inositol 4-phosphate. The Cytoplasmic portion of the chain corresponds to 404–423 (NKDFQNAFKKIVRCKFCRRR).

The protein belongs to the G-protein coupled receptor 1 family. 5-hydroxytryptamine receptor subfamily. HTR1A sub-subfamily. Heterodimer; heterodimerizes with GPER1. Interacts with YIF1B. Interacts with GPR39 and GALR1.

It is found in the cell membrane. It localises to the cell projection. The protein resides in the dendrite. G-protein coupled receptor activity is regulated by lipids: phosphatidylinositol 4-phosphate increases HTR1A-mediated activity. In terms of biological role, G-protein coupled receptor for 5-hydroxytryptamine (serotonin). Also functions as a receptor for various drugs and psychoactive substances. Ligand binding causes a conformation change that triggers signaling via guanine nucleotide-binding proteins (G proteins) and modulates the activity of downstream effectors, such as adenylate cyclase. HTR1A is coupled to G(i)/G(o) G alpha proteins and mediates inhibitory neurotransmission: signaling inhibits adenylate cyclase activity and activates a phosphatidylinositol-calcium second messenger system that regulates the release of Ca(2+) ions from intracellular stores. Beta-arrestin family members regulate signaling by mediating both receptor desensitization and resensitization processes. This is 5-hydroxytryptamine receptor 1A (HTR1A) from Canis lupus familiaris (Dog).